The sequence spans 939 residues: Nonsense-mediated mRNA decay factor SMG8 (939 aa).

Disordered regions lie at residues 561 to 600 and 617 to 645; these read KICT…QLSP and LNES…ADTE. Residues 567-587 are compositionally biased toward acidic residues; sequence GEDENEDGETEEADEDTEEKE. Low complexity predominate over residues 617–629; that stretch reads LNESQESSEQLSG.

Belongs to the SMG8 family.

In terms of biological role, involved in nonsense-mediated decay (NMD) of mRNAs containing premature stop codons. Probable component of kinase complex containing nonC and recruited to stalled ribosomes. The chain is Nonsense-mediated mRNA decay factor SMG8 from Drosophila ananassae (Fruit fly).